The primary structure comprises 404 residues: G-protein coupled receptor 143 (404 aa).

Residues 1-28 are Extracellular-facing; the sequence is MASPRLGTFCCPTRDAATQLVLSFQPRA. The chain crosses the membrane as a helical span at residues 29–49; sequence FHALCLGSGGLRLALGLLQLL. Topologically, residues 50–78 are cytoplasmic; that stretch reads PGRRPAGPGSPATSPPASVRILRAAAACD. A helical transmembrane segment spans residues 79-99; sequence LLGCLGMVIRSTVWLGFPNFV. Residues 100–124 are Extracellular-facing; that stretch reads DSVSDMNHTEIWPAAFCVGSAMWIQ. A glycan (N-linked (GlcNAc...) asparagine) is linked at Asn106. Residues 125–145 form a helical membrane-spanning segment; sequence LLYSACFWWLFCYAVDAYLVI. The Cytoplasmic segment spans residues 146 to 149; it reads RRSA. A helical membrane pass occupies residues 150-170; the sequence is GLSTILLYHIMAWGLATLLCV. Residues 171–191 lie on the Extracellular side of the membrane; the sequence is EGAAMLYYPSVSRCERGLDHA. Residues 192 to 212 traverse the membrane as a helical segment; the sequence is IPHYVTMYLPLLLVLVANPIL. The Cytoplasmic portion of the chain corresponds to 213–248; sequence FQKTVTAVASLLKGRQGIYTENERRMGAVIKIRFFK. Residues 221–238 are necessary for its G protein-activation ability and normal distribution of melanosomes; it reads ASLLKGRQGIYTENERRM. Residues 222–231 carry the lysosomal/melanosomal membrane localization signal motif; the sequence is SLLKGRQGIY. A helical transmembrane segment spans residues 249–269; sequence IMLVLIICWLSNIINESLLFY. At 270-292 the chain is on the extracellular side; that stretch reads LEMQTDINGGSLKPVRTAAKTTW. The chain crosses the membrane as a helical span at residues 293-313; it reads FIMGILNPAQGFLLSLAFYGW. The Cytoplasmic portion of the chain corresponds to 314–404; sequence TGCSLGFQSP…DPALPTHGDL (91 aa). Residues 329–330 carry the lysosomal/melanosomal membrane localization signal motif; that stretch reads WE. The disordered stretch occupies residues 338 to 404; that stretch reads EGAHPSPLMP…DPALPTHGDL (67 aa). The segment covering 355–366 has biased composition (polar residues); sequence KVSQVGGQTSDE.

This sequence belongs to the G-protein coupled receptor OA family. In terms of assembly, interacts with heterotrimeric G(i) proteins. Interacts with ARRB1 and ARRB2. Interacts with MLANA. In terms of processing, glycosylated. Phosphorylated. In terms of tissue distribution, expressed at high levels in the retina, including the retinal pigment epithelium (RPE), and in melanocytes. Weak expression is observed in brain and adrenal gland.

Its subcellular location is the melanosome membrane. It localises to the lysosome membrane. The protein localises to the apical cell membrane. In terms of biological role, receptor for tyrosine, L-DOPA and dopamine. After binding to L-DOPA, stimulates Ca(2+) influx into the cytoplasm, increases secretion of the neurotrophic factor SERPINF1 and relocalizes beta arrestin at the plasma membrane; this ligand-dependent signaling occurs through a G(q)-mediated pathway in melanocytic cells. Its activity is mediated by G proteins which activate the phosphoinositide signaling pathway. Also plays a role as an intracellular G protein-coupled receptor involved in melanosome biogenesis, organization and transport. This chain is G-protein coupled receptor 143 (GPR143), found in Homo sapiens (Human).